The following is a 502-amino-acid chain: MKIGFDHEKYLEEQSKYILERVDSYDKLYLEFGGKLFNDRHAMRVLPGFDENAKIKLLHKLKEKVEVVICVYAGDIERNKIRGDFGITYDMDVLRLIDDLRTYELEVNSVVITRYNGQPATTVFINKLERRGIKVYKHKSTKGYPTDVDTIVSEEGYGQNPYIETTKPIVVVTAPGPGSGKLATCLSQLYHESKRGNAAGYSKFETFPVWNVPLKHPLNIAYEAATVDLKDVNMLDSFHMDAYNKVTVNYNRDIESFPVLKRIIEKITCKESIYKSPTDMGVNRVGFGIVDDDAVKEASKQEIIRRYFKTGCDYKKGYADKETFDRSKLIMEEVDLKETDRKVVLPAREKSAKLKMATDENEICPVVALELSDGKILTGKSSDLMDGAAAVIINAIKYLANISDDIYLISPVILEPIMNLKSKTFNEKNISLNCEEVLTALSISAATNPTAQVAMEKLPLLRGCQAHATTILSRADDTTLGKLGIDVTCDPNYPSESLYYNN.

This sequence belongs to the UPF0371 family.

The chain is UPF0371 protein CLL_A2797 from Clostridium botulinum (strain Eklund 17B / Type B).